A 62-amino-acid polypeptide reads, in one-letter code: Metallothionein (62 aa).

At Met-1 the chain carries N-acetylmethionine. A beta region spans residues 1–30; sequence MDPQDCKCETGASCSCGTTCSCSNCKCTSC. Residues Cys-6, Cys-8, Cys-14, Cys-16, Cys-20, Cys-22, Cys-25, Cys-27, Cys-30, Cys-34, Cys-35, Cys-37, Cys-38, Cys-42, Cys-45, Cys-49, Cys-51, Cys-58, Cys-60, and Cys-61 each coordinate a divalent metal cation. The interval 31–62 is alpha; it reads KKSCCSCCPAECSKCSQGCHCEKGSKKCSCCN.

This sequence belongs to the metallothionein superfamily. Type 1 family.

Metallothioneins have a high content of cysteine residues that bind various heavy metals. The polypeptide is Metallothionein (mt-a) (Xenopus laevis (African clawed frog)).